Consider the following 781-residue polypeptide: ATP-dependent 6-phosphofructokinase (781 aa).

The N-terminal catalytic PFK domain 1 stretch occupies residues 1–394; sequence MATWMEGKYV…NLATYIKLSK (394 aa). Residues G27, 90–91, and 120–123 each bind ATP; these read RC and GDGS. D121 is a binding site for Mg(2+). Residues 166-168, R203, 210-212, E266, R294, and 300-303 contribute to the substrate site; these read SID, MGR, and HVQR. D168 functions as the Proton acceptor in the catalytic mechanism. The interval 395–409 is interdomain linker; it reads IEQPRQSVMSSENNL. The tract at residues 410-781 is C-terminal regulatory PFK domain 2; it reads RIGIVNVGAP…ESIMAGTDRK (372 aa). Beta-D-fructose 2,6-bisphosphate is bound by residues R479, 537–541, R575, 582–584, D638, R664, 670–673, and R745; these read TISNN, MGG, and HMQQ.

Belongs to the phosphofructokinase type A (PFKA) family. ATP-dependent PFK group I subfamily. Eukaryotic two domain clade 'E' sub-subfamily. Homotetramer. Mg(2+) serves as cofactor.

It localises to the cytoplasm. The enzyme catalyses beta-D-fructose 6-phosphate + ATP = beta-D-fructose 1,6-bisphosphate + ADP + H(+). It functions in the pathway carbohydrate degradation; glycolysis; D-glyceraldehyde 3-phosphate and glycerone phosphate from D-glucose: step 3/4. With respect to regulation, allosterically activated by ADP, AMP, or fructose 2,6-bisphosphate, and allosterically inhibited by ATP or citrate. Functionally, catalyzes the phosphorylation of D-fructose 6-phosphate to fructose 1,6-bisphosphate by ATP, the first committing step of glycolysis. The protein is ATP-dependent 6-phosphofructokinase (PFK) of Schistosoma mansoni (Blood fluke).